The following is a 361-amino-acid chain: Histidinol-phosphate aminotransferase (361 aa).

Lys-219 carries the N6-(pyridoxal phosphate)lysine modification.

This sequence belongs to the class-II pyridoxal-phosphate-dependent aminotransferase family. Histidinol-phosphate aminotransferase subfamily. Homodimer. Pyridoxal 5'-phosphate serves as cofactor.

The enzyme catalyses L-histidinol phosphate + 2-oxoglutarate = 3-(imidazol-4-yl)-2-oxopropyl phosphate + L-glutamate. The protein operates within amino-acid biosynthesis; L-histidine biosynthesis; L-histidine from 5-phospho-alpha-D-ribose 1-diphosphate: step 7/9. The chain is Histidinol-phosphate aminotransferase from Acinetobacter baumannii (strain SDF).